The sequence spans 127 residues: Small ribosomal subunit protein uS11 (127 aa).

The protein belongs to the universal ribosomal protein uS11 family. Part of the 30S ribosomal subunit. Interacts with proteins S7 and S18. Binds to IF-3.

Its function is as follows. Located on the platform of the 30S subunit, it bridges several disparate RNA helices of the 16S rRNA. Forms part of the Shine-Dalgarno cleft in the 70S ribosome. This Ruthia magnifica subsp. Calyptogena magnifica protein is Small ribosomal subunit protein uS11.